A 417-amino-acid chain; its full sequence is Aminoacyltransferase FemB (417 aa).

Belongs to the FemABX family.

It is found in the cytoplasm. The enzyme catalyses MurNAc-L-Ala-D-isoglutaminyl-L-Lys-(N(6)-tri-Gly)-D-Ala-D-Ala-diphospho-di-trans,octa-cis-undecaprenyl-GlcNAc + 2 glycyl-tRNA(Gly) = MurNAc-L-Ala-D-isoglutaminyl-L-Lys-(N(6)-penta-Gly)-D-Ala-D-Ala-diphospho-di-trans,octa-cis-undecaprenyl-GlcNAc + 2 tRNA(Gly) + 2 H(+). Its function is as follows. Catalyzes the incorporation of amino acid(s) into the interchain peptide bridge of peptidoglycan, using aminoacyl-tRNA as amino acid donor. The chain is Aminoacyltransferase FemB (femB) from Staphylococcus epidermidis (strain ATCC 35984 / DSM 28319 / BCRC 17069 / CCUG 31568 / BM 3577 / RP62A).